A 283-amino-acid chain; its full sequence is E3 ubiquitin-protein ligase MARCHF5 (283 aa).

The RING-CH-type zinc finger occupies 9–78; the sequence is VQQMLDRSCW…PQCNAEYLIV (70 aa). Residues Cys-17, Cys-20, Cys-36, Cys-38, His-46, Cys-49, Cys-68, and Cys-71 each contribute to the Zn(2+) site. 4 helical membrane passes run 102–122, 142–162, 212–232, and 241–261; these read FAAAGIMVGSIYWTAVTYGAV, PLFLLIGLPTIPVVLILGKMI, ILCGALVFPTIATIVGKLMFS, and TILGGIAFVAIKGAFKVYFKQ.

It is found in the mitochondrion outer membrane. Its subcellular location is the endoplasmic reticulum membrane. It carries out the reaction S-ubiquitinyl-[E2 ubiquitin-conjugating enzyme]-L-cysteine + [acceptor protein]-L-lysine = [E2 ubiquitin-conjugating enzyme]-L-cysteine + N(6)-ubiquitinyl-[acceptor protein]-L-lysine.. It functions in the pathway protein modification; protein ubiquitination. Mitochondrial E3 ubiquitin-protein ligase that plays a crucial role in the control of mitochondrial morphology by acting as a positive regulator of mitochondrial fission. May play a role in the prevention of cell senescence acting as a regulator of mitochondrial quality control. This chain is E3 ubiquitin-protein ligase MARCHF5 (marchf5), found in Xenopus laevis (African clawed frog).